Here is a 155-residue protein sequence, read N- to C-terminus: Zinc finger HIT domain-containing protein 3 (155 aa).

8 residues coordinate Zn(2+): C11, C14, C22, C25, C30, C34, H38, and C42. The HIT-type zinc-finger motif lies at 11–42 (CVICLEKPKYRCPACRVPYCSVVCFRKHKEQC). Residue S80 is modified to Phosphoserine.

Thyroid receptor interacting proteins (TRIPs) specifically interact with the ligand binding domain of the thyroid receptor (TR). Requires the presence of thyroid hormone for its interaction. Interacts with NUFIP1. Interacts (via HIT-type zinc finger) with the RUVBL1/RUVBL2 complex in the presence of ADP.

The protein localises to the cytoplasm. Its subcellular location is the nucleus. This is Zinc finger HIT domain-containing protein 3 (ZNHIT3) from Homo sapiens (Human).